Consider the following 204-residue polypeptide: Protein DESIGUAL 4 (204 aa).

4 helical membrane passes run 13-33 (IITV…VAGF), 60-80 (FVLG…ANVI), 107-127 (CLFL…NGIW), and 143-163 (VFSI…IYYI). The interval 177–204 (KPNKTKPSELKPIPTEPNEAEPNSTPNP) is disordered. The N-linked (GlcNAc...) asparagine glycan is linked to Asn-179.

This sequence belongs to the DESIGUAL family. In terms of tissue distribution, only expressed in inflorescences.

The protein resides in the endoplasmic reticulum membrane. The polypeptide is Protein DESIGUAL 4 (Arabidopsis thaliana (Mouse-ear cress)).